Reading from the N-terminus, the 595-residue chain is Chaperone protein HscA homolog (595 aa).

It belongs to the heat shock protein 70 family.

Its function is as follows. Chaperone involved in the maturation of iron-sulfur cluster-containing proteins. Has a low intrinsic ATPase activity which is markedly stimulated by HscB. The sequence is that of Chaperone protein HscA homolog from Rickettsia akari (strain Hartford).